The primary structure comprises 214 residues: High frequency lysogenization protein HflD homolog (214 aa).

It belongs to the HflD family.

The protein localises to the cytoplasm. It localises to the cell inner membrane. This chain is High frequency lysogenization protein HflD homolog, found in Chromohalobacter salexigens (strain ATCC BAA-138 / DSM 3043 / CIP 106854 / NCIMB 13768 / 1H11).